Here is a 154-residue protein sequence, read N- to C-terminus: Endoribonuclease YbeY (154 aa).

Residues His114, His118, and His124 each contribute to the Zn(2+) site.

The protein belongs to the endoribonuclease YbeY family. The cofactor is Zn(2+).

Its subcellular location is the cytoplasm. In terms of biological role, single strand-specific metallo-endoribonuclease involved in late-stage 70S ribosome quality control and in maturation of the 3' terminus of the 16S rRNA. The protein is Endoribonuclease YbeY of Aggregatibacter actinomycetemcomitans (Actinobacillus actinomycetemcomitans).